Consider the following 182-residue polypeptide: UPF0149 protein PM1723 (182 aa).

Belongs to the UPF0149 family.

The chain is UPF0149 protein PM1723 from Pasteurella multocida (strain Pm70).